The chain runs to 77 residues: MAFERQGKIEKKISYSLFLNGPNVHFGSILFGAVDKSKYAEELCTHPMRQAYNTLDSNSRIIITVQSVAILDGKLVW.

A Peptidase A1 domain is found at 1–77 (MAFERQGKIE…VAILDGKLVW (77 aa)).

This is an uncharacterized protein from Saccharomyces cerevisiae (strain ATCC 204508 / S288c) (Baker's yeast).